A 312-amino-acid polypeptide reads, in one-letter code: Ribonuclease HIII (312 aa).

Residues 95 to 311 (FNCIGSDEAG…REKAQKILKP (217 aa)) enclose the RNase H type-2 domain. Residues Asp101, Glu102, and Asp206 each coordinate a divalent metal cation.

The protein belongs to the RNase HII family. RnhC subfamily. Mn(2+) is required as a cofactor. Requires Mg(2+) as cofactor.

Its subcellular location is the cytoplasm. It carries out the reaction Endonucleolytic cleavage to 5'-phosphomonoester.. Endonuclease that specifically degrades the RNA of RNA-DNA hybrids. In Staphylococcus aureus (strain Mu3 / ATCC 700698), this protein is Ribonuclease HIII.